We begin with the raw amino-acid sequence, 627 residues long: Carnitine O-acetyltransferase (627 aa).

The propeptide occupies 1-30; the sequence is MDRKQKQAEKARPYGLLKPAALGKIPGRFQ. Lysine 94 is subject to N6-succinyllysine. Residue lysine 262 is modified to N6-acetyllysine; alternate. Position 262 is an N6-succinyllysine; alternate (lysine 262). Lysine 269 carries the N6-acetyllysine modification. Histidine 344 serves as the catalytic Proton acceptor. Residues lysine 420 and 424 to 431 contribute to the CoA site; that span reads KSEKISPD. Residues tyrosine 453 and serine 455 each coordinate (R)-carnitine. Residue serine 457 participates in CoA binding. Threonine 466 lines the (R)-carnitine pocket. Glutamine 556 is a binding site for CoA. Residues 625-627 carry the Microbody targeting signal motif; it reads SKL.

Belongs to the carnitine/choline acetyltransferase family. As to quaternary structure, monomer.

It localises to the endoplasmic reticulum. The protein resides in the peroxisome. The protein localises to the mitochondrion inner membrane. The enzyme catalyses (R)-carnitine + acetyl-CoA = O-acetyl-(R)-carnitine + CoA. It catalyses the reaction propanoyl-CoA + (R)-carnitine = O-propanoyl-(R)-carnitine + CoA. It carries out the reaction butanoyl-CoA + (R)-carnitine = O-butanoyl-(R)-carnitine + CoA. The catalysed reaction is hexanoyl-CoA + (R)-carnitine = O-hexanoyl-(R)-carnitine + CoA. The enzyme catalyses octanoyl-CoA + (R)-carnitine = O-octanoyl-(R)-carnitine + CoA. It catalyses the reaction decanoyl-CoA + (R)-carnitine = O-decanoyl-(R)-carnitine + CoA. It carries out the reaction 3-methylbutanoyl-CoA + (R)-carnitine = O-3-methylbutanoyl-(R)-carnitine + CoA. The catalysed reaction is 2-methylpropanoyl-CoA + (R)-carnitine = O-isobutanoyl-(R)-carnitine + CoA. The enzyme catalyses 2-methylbutanoyl-CoA + (R)-carnitine = O-2-methylbutanoyl-(R)-carnitine + CoA. It catalyses the reaction acetoacetyl-CoA + (R)-carnitine = O-3-oxobutanoyl-(R)-carnitine + CoA. It carries out the reaction 3-hydroxybutanoyl-CoA + (R)-carnitine = O-3-hydroxybutanoyl-(R)-carnitine + CoA. The catalysed reaction is 4,8-dimethylnonanoyl-CoA + (R)-carnitine = O-4,8-dimethylnonanoyl-(R)-carnitine + CoA. The enzyme catalyses 2,6-dimethylheptanoyl-CoA + (R)-carnitine = O-2,6-dimethylheptanoyl-(R)-carnitine + CoA. Its function is as follows. Catalyzes the reversible transfer of acyl groups from carnitine to coenzyme A (CoA) and regulates the acyl-CoA/CoA ratio. Also plays a crucial role in the transport of fatty acids for beta-oxidation. Responsible for the synthesis of short- and branched-chain acylcarnitines. Active towards some branched-chain amino acid oxidation pathway (BCAAO) intermediates. Trans-2-enoyl-CoAs and 2-methylacyl-CoAs are poor substrates. This chain is Carnitine O-acetyltransferase (CRAT), found in Columba livia (Rock dove).